The sequence spans 161 residues: Protein-export protein SecB (161 aa).

It belongs to the SecB family. Homotetramer, a dimer of dimers. One homotetramer interacts with 1 SecA dimer.

It is found in the cytoplasm. Its function is as follows. One of the proteins required for the normal export of preproteins out of the cell cytoplasm. It is a molecular chaperone that binds to a subset of precursor proteins, maintaining them in a translocation-competent state. It also specifically binds to its receptor SecA. The sequence is that of Protein-export protein SecB from Coxiella burnetii (strain Dugway 5J108-111).